The sequence spans 211 residues: PITH domain-containing protein 1 (211 aa).

A PITH domain is found at 20–192; the sequence is EPPEQRGLAY…EVTICNYEAS (173 aa). Residue Y189 is modified to Phosphotyrosine.

This sequence belongs to the PITHD1 family. In terms of tissue distribution, down-regulated in primary acute myeloid leukemia (AML) patients.

Its subcellular location is the cytoplasm. Its function is as follows. Promotes megakaryocyte differentiation by up-regulating RUNX1 expression. Regulates RUNX1 expression by activating the proximal promoter of the RUNX1 gene and by enhancing the translation activity of an internal ribosome entry site (IRES) element in the RUNX1 gene. The sequence is that of PITH domain-containing protein 1 (PITHD1) from Homo sapiens (Human).